The following is a 320-amino-acid chain: Sucrose operon repressor (320 aa).

Positions 1-55 (MKNIADIAKIAGVSKSTVSRYLNNGSVSLKTQQKLDEIIRENDYQPNQFAQSLRA) constitute an HTH lacI-type domain. A DNA-binding region (H-T-H motif) is located at residues 4–23 (IADIAKIAGVSKSTVSRYLN).

Its function is as follows. Negative regulator of scrB expression. This is Sucrose operon repressor (scrR) from Staphylococcus xylosus.